The following is a 431-amino-acid chain: Shaggy-related protein kinase beta (431 aa).

The segment covering 12 to 24 (SGRNFVSSDNVGE) has biased composition (polar residues). Residues 12–65 (SGRNFVSSDNVGETETPRSKPNQNREETESTETTSYEKDSVSSSENSDHLPKEI) form a disordered region. Composition is skewed to basic and acidic residues over residues 26 to 39 (ETPRSKPNQNREET) and 46 to 65 (SYEKDSVSSSENSDHLPKEI). The 285-residue stretch at 102 to 386 (YRAEHVIGTG…ALEACAHPFF (285 aa)) folds into the Protein kinase domain. ATP is bound by residues 108 to 116 (IGTGSFGVV) and K131. The Proton acceptor role is filled by D227. Y262 is modified (phosphotyrosine).

It belongs to the protein kinase superfamily. CMGC Ser/Thr protein kinase family. GSK-3 subfamily. Post-translationally, autophosphorylated mainly on threonine and serine residues.

The enzyme catalyses L-seryl-[protein] + ATP = O-phospho-L-seryl-[protein] + ADP + H(+). It carries out the reaction L-threonyl-[protein] + ATP = O-phospho-L-threonyl-[protein] + ADP + H(+). May mediate extracellular signals to regulate transcription in differentiating cells. The protein is Shaggy-related protein kinase beta of Arabidopsis thaliana (Mouse-ear cress).